Consider the following 283-residue polypeptide: Phosphatidylserine decarboxylase proenzyme (283 aa).

Residues D96, H152, and S250 each act as charge relay system; for autoendoproteolytic cleavage activity in the active site. The active-site Schiff-base intermediate with substrate; via pyruvic acid; for decarboxylase activity is the S250. The residue at position 250 (S250) is a Pyruvic acid (Ser); by autocatalysis.

This sequence belongs to the phosphatidylserine decarboxylase family. PSD-B subfamily. Prokaryotic type I sub-subfamily. Heterodimer of a large membrane-associated beta subunit and a small pyruvoyl-containing alpha subunit. Pyruvate is required as a cofactor. In terms of processing, is synthesized initially as an inactive proenzyme. Formation of the active enzyme involves a self-maturation process in which the active site pyruvoyl group is generated from an internal serine residue via an autocatalytic post-translational modification. Two non-identical subunits are generated from the proenzyme in this reaction, and the pyruvate is formed at the N-terminus of the alpha chain, which is derived from the carboxyl end of the proenzyme. The autoendoproteolytic cleavage occurs by a canonical serine protease mechanism, in which the side chain hydroxyl group of the serine supplies its oxygen atom to form the C-terminus of the beta chain, while the remainder of the serine residue undergoes an oxidative deamination to produce ammonia and the pyruvoyl prosthetic group on the alpha chain. During this reaction, the Ser that is part of the protease active site of the proenzyme becomes the pyruvoyl prosthetic group, which constitutes an essential element of the active site of the mature decarboxylase.

The protein resides in the cell membrane. The catalysed reaction is a 1,2-diacyl-sn-glycero-3-phospho-L-serine + H(+) = a 1,2-diacyl-sn-glycero-3-phosphoethanolamine + CO2. It participates in phospholipid metabolism; phosphatidylethanolamine biosynthesis; phosphatidylethanolamine from CDP-diacylglycerol: step 2/2. Its function is as follows. Catalyzes the formation of phosphatidylethanolamine (PtdEtn) from phosphatidylserine (PtdSer). This is Phosphatidylserine decarboxylase proenzyme from Acinetobacter baumannii (strain SDF).